The following is a 424-amino-acid chain: MPESMHASSRFVSRLTRQTLALILAGGRGSRLQKLTEWRAKPAVPFGGKFRIIDFPLSNCVNSGIRQVGVLTQYKADSLIRHIQQGWGFLRGELGEFIDIMPAQQRLQESWYAGTADAVYQNLDIIRQRDPEFIMILAGDHVYKMDYGLMLAYHVERKADLTIGCMEVPLADAKAFGVMQMDGEQRIRKFVEKPSDPPPMPNRPDHAAASMGIYIFNTAFLFEQLIKDADTPGSNHDFGMDIIPQVIQKYRVFAYRFRNAQSGVQAYWRDVGTVDSYWAANMELIGVDPELNLYDQEWPIWTYQAQTPPAKFVFDDDDRRGMAVDSMVSGGCIISGAEVRHSLLFSNVRVNSFSRVLDSVILPDVNIGRHCRISRAVIDKGCNIPPNTVIGENLEDDRKRFYVSPEGIVLVTPDCLGQRLHFHR.

Alpha-D-glucose 1-phosphate is bound by residues Y112, G177, 192 to 193 (EK), and S210.

This sequence belongs to the bacterial/plant glucose-1-phosphate adenylyltransferase family. As to quaternary structure, homotetramer.

The enzyme catalyses alpha-D-glucose 1-phosphate + ATP + H(+) = ADP-alpha-D-glucose + diphosphate. It functions in the pathway glycan biosynthesis; glycogen biosynthesis. Involved in the biosynthesis of ADP-glucose, a building block required for the elongation reactions to produce glycogen. Catalyzes the reaction between ATP and alpha-D-glucose 1-phosphate (G1P) to produce pyrophosphate and ADP-Glc. This Methylococcus capsulatus (strain ATCC 33009 / NCIMB 11132 / Bath) protein is Glucose-1-phosphate adenylyltransferase.